The primary structure comprises 60 residues: Cytotoxin 4 (60 aa).

Cystine bridges form between cysteine 3-cysteine 21, cysteine 14-cysteine 38, cysteine 42-cysteine 53, and cysteine 54-cysteine 59.

This sequence belongs to the three-finger toxin family. Short-chain subfamily. Type IA cytotoxin sub-subfamily. In terms of assembly, monomer in solution; Homodimer and oligomer in the presence of negatively charged lipids forming a pore with a size ranging between 20 and 30 Angstroms. As to expression, expressed by the venom gland.

The protein resides in the secreted. It localises to the target cell membrane. Its function is as follows. Shows cytolytic activity on many different cells by forming pore in lipid membranes. In vivo, increases heart rate or kills the animal by cardiac arrest. In addition, it binds to heparin with high affinity, interacts with Kv channel-interacting protein 1 (KCNIP1) in a calcium-independent manner, and binds to integrin alpha-V/beta-3 (ITGAV/ITGB3) with moderate affinity. The chain is Cytotoxin 4 from Naja mossambica (Mozambique spitting cobra).